The following is a 138-amino-acid chain: Cysteine desulfuration protein SufE (138 aa).

The active-site Cysteine persulfide intermediate is the Cys51.

This sequence belongs to the SufE family. Homodimer. Interacts with SufS.

It is found in the cytoplasm. Its pathway is cofactor biosynthesis; iron-sulfur cluster biosynthesis. Its function is as follows. Participates in cysteine desulfuration mediated by SufS. Cysteine desulfuration mobilizes sulfur from L-cysteine to yield L-alanine and constitutes an essential step in sulfur metabolism for biosynthesis of a variety of sulfur-containing biomolecules. Functions as a sulfur acceptor for SufS, by mediating the direct transfer of the sulfur atom from the S-sulfanylcysteine of SufS, an intermediate product of cysteine desulfuration process. The chain is Cysteine desulfuration protein SufE from Escherichia coli O8 (strain IAI1).